The primary structure comprises 242 residues: Protein HTATIP2 (242 aa).

Alanine 2 is subject to N-acetylalanine. The required for interaction with elongation factor EEF1A1 stretch occupies residues 2-25; sequence AETEALSKLREDFRMQNKSVFILG. NADPH contacts are provided by serine 27, glycine 28, glutamate 29, threonine 30, arginine 52, arginine 53, leucine 92, glycine 93, tyrosine 143, lysine 147, leucine 170, and arginine 178. The Proton acceptor role is filled by tyrosine 143. Residue lysine 147 is part of the active site.

As to quaternary structure, monomer. Forms homodimers during oxidative stress. Interacts (via N-terminus) with elongation factor EEF1A1 (via middle-region); the interaction is direct and competes with EEF1A1 binding to guanyl-nucleotide exchange factor EEF1B2, thereby inhibiting GDP for GTP exchange and reactivation of EEF1A1. Interacts with nuclear transport receptors XPO4, IPO5/RANBP5, IPO7, IPO9 and KPNB1 as well as GCN1L1/GCN1 and LRPPRC probably through their HEAT repeats. Binds NCOA5/CIA. In terms of assembly, interacts (via N-terminus) with proteasome subunit PSMD4/s5a. (Microbial infection) Interacts with HIV-1 Tat (via activation domain). High levels in liver, lung, skeletal muscle, pancreas and placenta. Moderate levels in heart and kidney. Low levels in brain. Not expressed or low levels in variant small cell lung carcinomas, 33% of hepatocellular carcinomas and neuroblastomas. Levels are reduced in the heart of patients with hypertrophic cardiomyopathy and failing hearts.

It localises to the cytoplasm. Its function is as follows. Represses translation by preventing reactivation of elongation factor eEF1A. May also inhibit nuclear import by competing with nuclear import substrates for binding to a subset of nuclear transport receptors. Has additionally been proposed to act as a redox sensor involved in cellular oxidative stress surveillance. The sequence is that of Protein HTATIP2 from Homo sapiens (Human).